A 493-amino-acid chain; its full sequence is GTPase Der (493 aa).

EngA-type G domains follow at residues 3–166 (PVVA…SGKG) and 207–380 (LKLA…DCAT). GTP-binding positions include 9-16 (GRPNVGKS), 56-60 (DTGGI), 118-121 (NKTD), 213-220 (GKPNVGKS), 260-264 (DTAGV), and 325-328 (NKWD). The KH-like domain maps to 381-465 (RRVNTSLLTR…PIRIQFKEGA (85 aa)).

This sequence belongs to the TRAFAC class TrmE-Era-EngA-EngB-Septin-like GTPase superfamily. EngA (Der) GTPase family. In terms of assembly, associates with the 50S ribosomal subunit.

GTPase that plays an essential role in the late steps of ribosome biogenesis. The protein is GTPase Der of Photorhabdus laumondii subsp. laumondii (strain DSM 15139 / CIP 105565 / TT01) (Photorhabdus luminescens subsp. laumondii).